Reading from the N-terminus, the 750-residue chain is MSTTIIGFPRLGEFRELKFTTEKYFRKEISADELLAAAKELRAKHWNIVKEKGISEIPSNDFSHYDNVLDAAFLFNVVPSSVRGLELTDLERYFALARGYQGEKGDVRALPMKKWFNTNYHYIVPKFEKETQVKLAGHKIFEEFAEAKELGLVTRPVVVGPFTLLQVSDFEDGVAPADFVDALATAYQEVFAKLAELGAKRIQLDEPSLVKDLSAEEKALFLDLYKKLLADKKGLEVLIQTYFGDVRDIYSDLVQLPVDAIGLDFVEGKKTLELVKGGFPADKTLYAGIVNGKNIWRNNYEKSLAVLEQIPAENIVLTSSCSLLHVPFTTANEEFEPAILNHFAFAVEKLDEIRDLDAIRNGQGAEALAANKELFATERVGENAELRARIAGLTDADYTRLPAFAEREAIQEEAFKLPALPTTTIGSFPQTKEVRAKRLAFRKGELSAEDYDKFLAEQIDEWIKWQEEVGFDVLVHGEFERNDMVEYFGQNLSGYLFSKNGWVQSYGMRGVKPPIIWGDVTRLNPITVKWSSYAQSRTEKPVKGMLTGPVTILNWSFPREDISIKDSTLQIALAIKDEVLDLEAAGVKIIQIDEAALREKLPLRRSDWYEDYLDWAIPAFRLVHSTVAPDTQIHTHMCYSEFTDIIPAIDNMDADVISFEASRSNLEILDELKAKNFQTEVGPGVYDIHSPRVPNEGEIDHTIEAILAKVPSKKVWINPDCGLKTRGIPETKASLVRLVEAAKAARQHLK.

5-methyltetrahydropteroyltri-L-glutamate contacts are provided by residues 15–18 (RELK) and lysine 114. L-homocysteine contacts are provided by residues 425 to 427 (IGS) and glutamate 478. L-methionine is bound by residues 425 to 427 (IGS) and glutamate 478. Tryptophan 555 serves as a coordination point for 5-methyltetrahydropteroyltri-L-glutamate. L-homocysteine is bound at residue aspartate 593. Aspartate 593 lines the L-methionine pocket. Position 599 (glutamate 599) interacts with 5-methyltetrahydropteroyltri-L-glutamate. Positions 636, 638, and 660 each coordinate Zn(2+). Catalysis depends on histidine 689, which acts as the Proton donor. Cysteine 721 lines the Zn(2+) pocket.

It belongs to the vitamin-B12 independent methionine synthase family. It depends on Zn(2+) as a cofactor.

It catalyses the reaction 5-methyltetrahydropteroyltri-L-glutamate + L-homocysteine = tetrahydropteroyltri-L-glutamate + L-methionine. The protein operates within amino-acid biosynthesis; L-methionine biosynthesis via de novo pathway; L-methionine from L-homocysteine (MetE route): step 1/1. Catalyzes the transfer of a methyl group from 5-methyltetrahydrofolate to homocysteine resulting in methionine formation. In Streptococcus gordonii (strain Challis / ATCC 35105 / BCRC 15272 / CH1 / DL1 / V288), this protein is 5-methyltetrahydropteroyltriglutamate--homocysteine methyltransferase.